The primary structure comprises 249 residues: Uridylate kinase (249 aa).

19–22 is an ATP binding site; it reads KLSG. Gly-61 provides a ligand contact to UMP. Gly-62 and Arg-66 together coordinate ATP. UMP-binding positions include Asp-81 and 142-149; that span reads TGNPYFTT. ATP is bound by residues Thr-169, Tyr-175, and Asp-178.

The protein belongs to the UMP kinase family. As to quaternary structure, homohexamer.

The protein resides in the cytoplasm. It carries out the reaction UMP + ATP = UDP + ADP. It functions in the pathway pyrimidine metabolism; CTP biosynthesis via de novo pathway; UDP from UMP (UMPK route): step 1/1. Its activity is regulated as follows. Inhibited by UTP. Functionally, catalyzes the reversible phosphorylation of UMP to UDP. The sequence is that of Uridylate kinase from Anaeromyxobacter sp. (strain Fw109-5).